Consider the following 128-residue polypeptide: Aspartate 1-decarboxylase (128 aa).

Residue Ser-25 is the Schiff-base intermediate with substrate; via pyruvic acid of the active site. Residue Ser-25 is modified to Pyruvic acid (Ser). Substrate is bound at residue Thr-57. The active-site Proton donor is the Tyr-58. Substrate is bound at residue 73–75 (GAA).

The protein belongs to the PanD family. In terms of assembly, heterooctamer of four alpha and four beta subunits. Pyruvate serves as cofactor. In terms of processing, is synthesized initially as an inactive proenzyme, which is activated by self-cleavage at a specific serine bond to produce a beta-subunit with a hydroxyl group at its C-terminus and an alpha-subunit with a pyruvoyl group at its N-terminus.

The protein localises to the cytoplasm. It carries out the reaction L-aspartate + H(+) = beta-alanine + CO2. It participates in cofactor biosynthesis; (R)-pantothenate biosynthesis; beta-alanine from L-aspartate: step 1/1. In terms of biological role, catalyzes the pyruvoyl-dependent decarboxylation of aspartate to produce beta-alanine. The protein is Aspartate 1-decarboxylase of Chlorobium luteolum (strain DSM 273 / BCRC 81028 / 2530) (Pelodictyon luteolum).